Here is a 185-residue protein sequence, read N- to C-terminus: dTTP/UTP pyrophosphatase (185 aa).

Residue Asp-64 is the Proton acceptor of the active site.

This sequence belongs to the Maf family. YhdE subfamily. It depends on a divalent metal cation as a cofactor.

It localises to the cytoplasm. It carries out the reaction dTTP + H2O = dTMP + diphosphate + H(+). The enzyme catalyses UTP + H2O = UMP + diphosphate + H(+). Functionally, nucleoside triphosphate pyrophosphatase that hydrolyzes dTTP and UTP. May have a dual role in cell division arrest and in preventing the incorporation of modified nucleotides into cellular nucleic acids. This Thermococcus gammatolerans (strain DSM 15229 / JCM 11827 / EJ3) protein is dTTP/UTP pyrophosphatase.